The following is a 157-amino-acid chain: SsrA-binding protein (157 aa).

A disordered region spans residues 132 to 157 (VHDKRQAQKDKDWAREKDRLFKKAYK). Basic and acidic residues predominate over residues 135–157 (KRQAQKDKDWAREKDRLFKKAYK).

The protein belongs to the SmpB family.

The protein resides in the cytoplasm. Required for rescue of stalled ribosomes mediated by trans-translation. Binds to transfer-messenger RNA (tmRNA), required for stable association of tmRNA with ribosomes. tmRNA and SmpB together mimic tRNA shape, replacing the anticodon stem-loop with SmpB. tmRNA is encoded by the ssrA gene; the 2 termini fold to resemble tRNA(Ala) and it encodes a 'tag peptide', a short internal open reading frame. During trans-translation Ala-aminoacylated tmRNA acts like a tRNA, entering the A-site of stalled ribosomes, displacing the stalled mRNA. The ribosome then switches to translate the ORF on the tmRNA; the nascent peptide is terminated with the 'tag peptide' encoded by the tmRNA and targeted for degradation. The ribosome is freed to recommence translation, which seems to be the essential function of trans-translation. In Francisella tularensis subsp. tularensis (strain FSC 198), this protein is SsrA-binding protein.